Here is a 782-residue protein sequence, read N- to C-terminus: Ribosome biogenesis protein ERB1 (782 aa).

2 disordered regions span residues 1 to 123 (MGSK…RIEK) and 339 to 361 (PEEY…EDRE). Positions 35-86 (SEDEEDYLPSDDDDDVEDSENEGTGASEDDDDDDDDDDILSDDIPSDVDSEE) are enriched in acidic residues. Residues 105-123 (VDPKREEDDGADRNYRIEK) show a composition bias toward basic and acidic residues. WD repeat units lie at residues 433-472 (GHEG…QVWS), 476-516 (NSEE…VTPA), 567-609 (TVRS…TQIP), 612-650 (KLSG…LVKV), 653-692 (PGAK…RPYK), 696-736 (FHGQ…DQLE), and 752-782 (VSKL…RLWM).

The protein belongs to the WD repeat BOP1/ERB1 family. Component of the NOP7 complex, composed of ERB1, NOP7 and YTM1. The complex is held together by ERB1, which interacts with NOP7 via its N-terminal domain and with YTM1 via a high-affinity interaction between the seven-bladed beta-propeller domains of the 2 proteins. The NOP7 complex associates with the 66S pre-ribosome.

The protein resides in the nucleus. The protein localises to the nucleolus. It localises to the nucleoplasm. In terms of biological role, component of the NOP7 complex, which is required for maturation of the 25S and 5.8S ribosomal RNAs and formation of the 60S ribosome. The sequence is that of Ribosome biogenesis protein ERB1 from Chaetomium globosum (strain ATCC 6205 / CBS 148.51 / DSM 1962 / NBRC 6347 / NRRL 1970) (Soil fungus).